A 181-amino-acid polypeptide reads, in one-letter code: uncharacterized protein (181 aa).

This is an uncharacterized protein from Escherichia coli (strain K12).